The sequence spans 53 residues: UPF0391 membrane protein BP1737 (53 aa).

Transmembrane regions (helical) follow at residues 5–25 (AVVFFVIAIIAAVLGFGGIAA) and 30–50 (IAKILFFVFLVLALLSILGGV).

Belongs to the UPF0391 family.

Its subcellular location is the cell membrane. This is UPF0391 membrane protein BP1737 from Bordetella pertussis (strain Tohama I / ATCC BAA-589 / NCTC 13251).